Consider the following 192-residue polypeptide: Orotate phosphoribosyltransferase (192 aa).

5-phospho-alpha-D-ribose 1-diphosphate-binding positions include Arg84, Lys88, and 110–118; that span reads DDVLTTGNS. Residues Thr114 and Arg142 each coordinate orotate.

It belongs to the purine/pyrimidine phosphoribosyltransferase family. PyrE subfamily. In terms of assembly, homodimer. Requires Mg(2+) as cofactor.

The catalysed reaction is orotidine 5'-phosphate + diphosphate = orotate + 5-phospho-alpha-D-ribose 1-diphosphate. It functions in the pathway pyrimidine metabolism; UMP biosynthesis via de novo pathway; UMP from orotate: step 1/2. Its function is as follows. Catalyzes the transfer of a ribosyl phosphate group from 5-phosphoribose 1-diphosphate to orotate, leading to the formation of orotidine monophosphate (OMP). This chain is Orotate phosphoribosyltransferase, found in Pyrobaculum calidifontis (strain DSM 21063 / JCM 11548 / VA1).